A 251-amino-acid chain; its full sequence is Thiamine thiazole synthase (251 aa).

Residues Ser-34, 53–54 (EK), Gly-61, Val-125, and 151–153 (HVD) each bind NAD(+). Positions 153 and 168 each coordinate Fe cation. Met-216 lines the NAD(+) pocket. Position 226 (Arg-226) interacts with glycine.

The protein belongs to the THI4 family. Homooctamer; tetramer of dimers. Requires Fe(2+) as cofactor.

The catalysed reaction is hydrogen sulfide + glycine + NAD(+) = ADP-5-ethyl-4-methylthiazole-2-carboxylate + nicotinamide + 3 H2O + H(+). It functions in the pathway cofactor biosynthesis; thiamine diphosphate biosynthesis. In terms of biological role, involved in the biosynthesis of the thiazole moiety of thiamine. Catalyzes the conversion of NAD and glycine to adenosine diphosphate 5-(2-hydroxyethyl)-4-methylthiazole-2-carboxylate (ADT), an adenylated thiazole intermediate, using free sulfide as a source of sulfur. The sequence is that of Thiamine thiazole synthase from Thermococcus kodakarensis (strain ATCC BAA-918 / JCM 12380 / KOD1) (Pyrococcus kodakaraensis (strain KOD1)).